Here is a 296-residue protein sequence, read N- to C-terminus: Giardin subunit alpha-2 (296 aa).

Annexin repeat units lie at residues 2 to 71 (PKLS…MDLF), 73 to 143 (DRHE…MEKW), 153 to 223 (GSPD…AHFA), and 226 to 293 (GMHK…TLWR).

It belongs to the annexin family. Giardin subunit alpha subfamily.

Its subcellular location is the cytoplasm. The protein resides in the cytoskeleton. In terms of biological role, giardins are involved in parasite attachment to the intestinal mucosa and in the cytoskeletal disassembly and reassembly that marks the transition from infectious trophozoite to transmissible cyst. They may interact with other cytoskeletal proteins such as microtubules in the microribbons or crossbridges, to maintain the integrity of the ventral disk. In Giardia intestinalis (Giardia lamblia), this protein is Giardin subunit alpha-2.